The chain runs to 126 residues: Aspartate 1-decarboxylase (126 aa).

The active-site Schiff-base intermediate with substrate; via pyruvic acid is Ser-25. Ser-25 is modified (pyruvic acid (Ser)). Thr-57 serves as a coordination point for substrate. The active-site Proton donor is Tyr-58. 72-74 (GAT) lines the substrate pocket.

Belongs to the PanD family. As to quaternary structure, heterooctamer of four alpha and four beta subunits. Requires pyruvate as cofactor. Post-translationally, is synthesized initially as an inactive proenzyme, which is activated by self-cleavage at a specific serine bond to produce a beta-subunit with a hydroxyl group at its C-terminus and an alpha-subunit with a pyruvoyl group at its N-terminus.

It localises to the cytoplasm. The enzyme catalyses L-aspartate + H(+) = beta-alanine + CO2. It participates in cofactor biosynthesis; (R)-pantothenate biosynthesis; beta-alanine from L-aspartate: step 1/1. In terms of biological role, catalyzes the pyruvoyl-dependent decarboxylation of aspartate to produce beta-alanine. The protein is Aspartate 1-decarboxylase of Campylobacter jejuni subsp. doylei (strain ATCC BAA-1458 / RM4099 / 269.97).